A 454-amino-acid chain; its full sequence is CCA-adding enzyme (454 aa).

Positions 59 and 62 each coordinate ATP. Positions 59 and 62 each coordinate CTP. The Mg(2+) site is built by D71, D73, and D125. H148, K167, and Y176 together coordinate ATP. Residues H148, K167, and Y176 each coordinate CTP.

This sequence belongs to the tRNA nucleotidyltransferase/poly(A) polymerase family. Archaeal CCA-adding enzyme subfamily. As to quaternary structure, homodimer. Mg(2+) is required as a cofactor.

The enzyme catalyses a tRNA precursor + 2 CTP + ATP = a tRNA with a 3' CCA end + 3 diphosphate. The catalysed reaction is a tRNA with a 3' CCA end + 2 CTP + ATP = a tRNA with a 3' CCACCA end + 3 diphosphate. Catalyzes the addition and repair of the essential 3'-terminal CCA sequence in tRNAs without using a nucleic acid template. Adds these three nucleotides in the order of C, C, and A to the tRNA nucleotide-73, using CTP and ATP as substrates and producing inorganic pyrophosphate. tRNA 3'-terminal CCA addition is required both for tRNA processing and repair. Also involved in tRNA surveillance by mediating tandem CCA addition to generate a CCACCA at the 3' terminus of unstable tRNAs. While stable tRNAs receive only 3'-terminal CCA, unstable tRNAs are marked with CCACCA and rapidly degraded. The protein is CCA-adding enzyme of Methanosarcina barkeri (strain Fusaro / DSM 804).